The primary structure comprises 475 residues: Retrotransposon Gag-like protein 3 (475 aa).

2 stretches are compositionally biased toward basic and acidic residues: residues 51–66 (LLRKSSEAKEPQKLPE) and 78–87 (KTPEFKEPQK). Disordered regions lie at residues 51 to 101 (LLRK…EPPA), 152 to 173 (EPKNSEPQDPPNIEKPQEAPEY), and 397 to 421 (DPNPLGKSSSAEGDGPESPPAENQP). Residues 443 to 462 (RLCLYCGYPGHFARDCPVKP) form a CCHC-type zinc finger.

The protein localises to the nucleus. May function as a transcriptional regulator. Plays a role in postnatal myogenesis, may be involved in the regulation of satellite cells self-renewal. In Homo sapiens (Human), this protein is Retrotransposon Gag-like protein 3.